A 144-amino-acid chain; its full sequence is Ferredoxin-thioredoxin reductase catalytic chain, chloroplastic (144 aa).

The N-terminal 31 residues, 1–31 (MTTQASTFAVAVPSVATPFRRHRNPFVVRAQ), are a transit peptide targeting the chloroplast. Position 83 (Cys83) interacts with [4Fe-4S] cluster. The Nucleophile role is filled by Cys85. Cys85 and Cys115 are disulfide-bonded. [4Fe-4S] cluster is bound by residues Cys102, Cys104, and Cys113.

This sequence belongs to the ferredoxin thioredoxin reductase beta subunit family. As to quaternary structure, heterodimer of subunit A (variable subunit) and subunit B (catalytic subunit). Heterodimeric FTR forms a complex with ferredoxin and thioredoxin. The cofactor is [4Fe-4S] cluster.

Its subcellular location is the plastid. It is found in the chloroplast. It carries out the reaction [thioredoxin]-disulfide + 2 reduced [2Fe-2S]-[ferredoxin] + 2 H(+) = [thioredoxin]-dithiol + 2 oxidized [2Fe-2S]-[ferredoxin]. In terms of biological role, catalytic subunit of the ferredoxin-thioredoxin reductase (FTR), which catalyzes the two-electron reduction of thioredoxins by the electrons provided by reduced ferredoxin. This is Ferredoxin-thioredoxin reductase catalytic chain, chloroplastic (FTRC) from Glycine max (Soybean).